Here is a 356-residue protein sequence, read N- to C-terminus: uncharacterized protein (356 aa).

This is an uncharacterized protein from Bacillus subtilis (strain 168).